We begin with the raw amino-acid sequence, 379 residues long: Sialidase-2 (379 aa).

The short motif at 20-23 (YRIP) is the FRIP motif element. Residues R21 and R41 each contribute to the substrate site. The Proton acceptor role is filled by D46. A BNR 1 repeat occupies 127-138 (ITSTDHGKTWSA). Substrate contacts are provided by Y179 and Y181. A BNR 2 repeat occupies 197 to 208 (FLSHDHGSTWEL). 3 residues coordinate substrate: E218, R237, and R303. Y333 (nucleophile) is an active-site residue. E354 is an active-site residue.

It belongs to the glycosyl hydrolase 33 family.

It localises to the cytoplasm. It carries out the reaction Hydrolysis of alpha-(2-&gt;3)-, alpha-(2-&gt;6)-, alpha-(2-&gt;8)- glycosidic linkages of terminal sialic acid residues in oligosaccharides, glycoproteins, glycolipids, colominic acid and synthetic substrates.. Functionally, catalyzes the removal of sialic acid (N-acetylneuraminic acid) moieties from glycoproteins, oligosaccharides and gangliosides. The polypeptide is Sialidase-2 (NEU2) (Cricetulus griseus (Chinese hamster)).